Here is a 358-residue protein sequence, read N- to C-terminus: MEMRICLLAGDGIGPEIMEQGVRVLETVAGKFGHDMEFTDALIGGAAIDETGDPLPQETVEACKAAQAVLLGAVGGPRWDNLTGAERPEAGLLGIRKALGLFANLRPAKLFPELASACFLRPDIVANGIDVMVVRELTGGIYFGTPAGEETRDGLRTAFNTMVYNEEEVRRIARVAFEAARKRSGRVCSVDKANVLAVSRLWREIVTATHADEFPDVELSHMYVDNAAMQLVRDPSQFDVIVTGNLFGDILSDEASVITGSIGMLPSASLGAGGPGLFEPIHGSAPDIAGQNKANPLATILSTAMMLRHSFGLEKEAEAVEGAVQQVLKAGYRTGDIMDQGGTLVGCNTMGNLVNERI.

76–89 (GPRWDNLTGAERPE) is a binding site for NAD(+). Substrate-binding residues include arginine 96, arginine 106, arginine 135, and aspartate 225. Mg(2+)-binding residues include aspartate 225, aspartate 249, and aspartate 253. 283–295 (GSAPDIAGQNKAN) serves as a coordination point for NAD(+).

This sequence belongs to the isocitrate and isopropylmalate dehydrogenases family. LeuB type 1 subfamily. As to quaternary structure, homodimer. Requires Mg(2+) as cofactor. It depends on Mn(2+) as a cofactor.

The protein localises to the cytoplasm. The enzyme catalyses (2R,3S)-3-isopropylmalate + NAD(+) = 4-methyl-2-oxopentanoate + CO2 + NADH. Its pathway is amino-acid biosynthesis; L-leucine biosynthesis; L-leucine from 3-methyl-2-oxobutanoate: step 3/4. In terms of biological role, catalyzes the oxidation of 3-carboxy-2-hydroxy-4-methylpentanoate (3-isopropylmalate) to 3-carboxy-4-methyl-2-oxopentanoate. The product decarboxylates to 4-methyl-2 oxopentanoate. This is 3-isopropylmalate dehydrogenase from Oleidesulfovibrio alaskensis (strain ATCC BAA-1058 / DSM 17464 / G20) (Desulfovibrio alaskensis).